The following is a 359-amino-acid chain: Phospho-N-acetylmuramoyl-pentapeptide-transferase (359 aa).

10 helical membrane-spanning segments follow: residues Gly-27–Leu-47, Thr-70–Ala-90, Val-97–Ala-117, Leu-133–Glu-153, Val-167–Ala-187, Gly-198–Val-218, Leu-238–Pro-258, Ala-261–Val-281, Ile-287–Val-307, and Gln-336–Leu-356.

It belongs to the glycosyltransferase 4 family. MraY subfamily. Requires Mg(2+) as cofactor.

Its subcellular location is the cell inner membrane. It catalyses the reaction UDP-N-acetyl-alpha-D-muramoyl-L-alanyl-gamma-D-glutamyl-meso-2,6-diaminopimeloyl-D-alanyl-D-alanine + di-trans,octa-cis-undecaprenyl phosphate = di-trans,octa-cis-undecaprenyl diphospho-N-acetyl-alpha-D-muramoyl-L-alanyl-D-glutamyl-meso-2,6-diaminopimeloyl-D-alanyl-D-alanine + UMP. Its pathway is cell wall biogenesis; peptidoglycan biosynthesis. Catalyzes the initial step of the lipid cycle reactions in the biosynthesis of the cell wall peptidoglycan: transfers peptidoglycan precursor phospho-MurNAc-pentapeptide from UDP-MurNAc-pentapeptide onto the lipid carrier undecaprenyl phosphate, yielding undecaprenyl-pyrophosphoryl-MurNAc-pentapeptide, known as lipid I. This Jannaschia sp. (strain CCS1) protein is Phospho-N-acetylmuramoyl-pentapeptide-transferase.